The primary structure comprises 251 residues: uncharacterized protein (251 aa).

3 N-linked (GlcNAc...) asparagine; by host glycosylation sites follow: N149, N152, and N207. Residues 226–246 (YLIFIIIIIIFIILILLWIKY) traverse the membrane as a helical segment.

This sequence belongs to the glycosyltransferase 32 family.

It localises to the membrane. This is an uncharacterized protein from Acanthamoeba polyphaga (Amoeba).